A 713-amino-acid polypeptide reads, in one-letter code: Undecaprenyl-diphosphooligosaccharide--protein glycotransferase (713 aa).

The Cytoplasmic segment spans residues 1–11 (MLKKEYLKNPY). A helical transmembrane segment spans residues 12 to 35 (LVLFAMIVLAYVFSVFCRFYWVWW). Over 36–96 (ASEFNEYFFN…YWLYKITPFS (61 aa)) the chain is Periplasmic. Residues 52 to 54 (SND) carry the DXD motif 1 motif. D54 is a binding site for Mn(2+). A helical transmembrane segment spans residues 97 to 122 (FESIILYMSTFLSSLVVIPIILLANE). Over 123-125 (YKR) the chain is Cytoplasmic. Residues 126–144 (PLMGFVAALLASVANSYYN) form a helical membrane-spanning segment. Residues 145 to 152 (RTMSGYYD) lie on the Periplasmic side of the membrane. D152 contributes to the Mn(2+) binding site. The DXD motif 2 signature appears at 152–154 (DTD). The chain crosses the membrane as a helical span at residues 153–174 (TDMLVIVLPMFILFFMVRMILK). At 175–176 (KD) the chain is on the cytoplasmic side. A helical transmembrane segment spans residues 177–192 (FFSLIALPLFIGIYLW). Residues 193–197 (WYPSS) are Periplasmic-facing. Residue 194–196 (YPS) participates in [alpha-D-GalNAc-(1-&gt;4)]2-[beta-D-Glc-(1-&gt;3)]-[alpha-D-GalNAc-(1-&gt;4)]2-alpha-D-GalNAc-(1-&gt;3)-alpha-D-diNAcBac-tri-trans,hepta-cis-undecaprenyl diphosphate binding. The helical transmembrane segment at 198–215 (YTLNVALIGLFLIYTLIF) threads the bilayer. The Cytoplasmic portion of the chain corresponds to 216 to 220 (HRKEK). The chain crosses the membrane as a helical span at residues 221-233 (IFYIAVILSSLTL). Residues 234–237 (SNIA) are Periplasmic-facing. The helical transmembrane segment at 238–254 (WFYQSAIIVILFALFAL) threads the bilayer. Topologically, residues 255-260 (EQKRLN) are cytoplasmic. The helical transmembrane segment at 261–278 (FMIIGILGSATLIFLILS) threads the bilayer. Residues 279-324 (GGVDPILYQLKFYIFRSDESANLTQGFMYFNVNQTIQEVENVDFSE) are Periplasmic-facing. [alpha-D-GalNAc-(1-&gt;4)]2-[beta-D-Glc-(1-&gt;3)]-[alpha-D-GalNAc-(1-&gt;4)]2-alpha-D-GalNAc-(1-&gt;3)-alpha-D-diNAcBac-tri-trans,hepta-cis-undecaprenyl diphosphate is bound at residue Y291. The TIXE motif motif lies at 313-316 (TIQE). Residue E316 participates in Mn(2+) binding. Residues 325–347 (FMRRISGSEIVFLFSLFGFVWLL) traverse the membrane as a helical segment. Topologically, residues 348–352 (RKHKS) are cytoplasmic. The chain crosses the membrane as a helical span at residues 353–369 (MIMALPILVLGFLALKG). At 370–373 (GLRF) the chain is on the periplasmic side. R372 lines the [alpha-D-GalNAc-(1-&gt;4)]2-[beta-D-Glc-(1-&gt;3)]-[alpha-D-GalNAc-(1-&gt;4)]2-alpha-D-GalNAc-(1-&gt;3)-alpha-D-diNAcBac-tri-trans,hepta-cis-undecaprenyl diphosphate pocket. The chain crosses the membrane as a helical span at residues 374 to 396 (TIYSVPVMALGFGFLLSEFKAIL). Residues 397-406 (VKKYSQLTSN) lie on the Cytoplasmic side of the membrane. Residues 407–427 (VCIVFATILTLAPVFIHIYNY) traverse the membrane as a helical segment. The Periplasmic segment spans residues 428–713 (KAPTVFSQNE…RDAKVFKLKI (286 aa)). The interacts with target acceptor peptide in protein substrate stretch occupies residues 457-459 (WWD). The WWDYG motif signature appears at 457–461 (WWDYG). Y462 contacts [alpha-D-GalNAc-(1-&gt;4)]2-[beta-D-Glc-(1-&gt;3)]-[alpha-D-GalNAc-(1-&gt;4)]2-alpha-D-GalNAc-(1-&gt;3)-alpha-D-diNAcBac-tri-trans,hepta-cis-undecaprenyl diphosphate. An N-linked (DATDGlc) asparagine glycan is attached at N534. The short motif at 568–575 (MSLIFSTV) is the MI motif element.

It belongs to the STT3 family. Mg(2+) is required as a cofactor. The cofactor is Mn(2+).

The protein localises to the cell inner membrane. It catalyses the reaction tritrans,heptacis-undecaprenyl diphosphooligosaccharide + [protein]-L-asparagine = tritrans,heptacis-undecaprenyl diphosphate + a glycoprotein with the oligosaccharide chain attached by N-beta-D-glycosyl linkage to protein L-asparagine.. The protein operates within protein modification; protein glycosylation. In terms of biological role, oligosaccharyl transferase (OST) that catalyzes the initial transfer of a defined glycan (GalNAc(2)GlcGalNAc(3)Bac(NAc)(2) in eubacteria, where Bac(NAc)(2) is di-N-acetyl bacillosamine) from the lipid carrier undecaprenol-pyrophosphate to an asparagine residue within an Asp/Glu-Asn-X-Ser/Thr consensus motif in nascent polypeptide chains, the first step in protein N-glycosylation. This chain is Undecaprenyl-diphosphooligosaccharide--protein glycotransferase (pglB), found in Campylobacter jejuni subsp. jejuni serotype O:2 (strain ATCC 700819 / NCTC 11168).